The sequence spans 127 residues: Prefoldin subunit 6 (127 aa).

A2 carries the N-acetylalanine modification. K21 bears the N6-acetyllysine mark. N6-acetyllysine; alternate is present on K66. Residue K66 forms a Glycyl lysine isopeptide (Lys-Gly) (interchain with G-Cter in SUMO1); alternate linkage. K66 is covalently cross-linked (Glycyl lysine isopeptide (Lys-Gly) (interchain with G-Cter in SUMO2); alternate).

It belongs to the prefoldin subunit beta family. In terms of assembly, heterohexamer of two PFD-alpha type and four PFD-beta type subunits. Component of the PAQosome complex which is responsible for the biogenesis of several protein complexes and which consists of R2TP complex members RUVBL1, RUVBL2, RPAP3 and PIH1D1, URI complex members PFDN2, PFDN6, PDRG1, UXT and URI1 as well as ASDURF, POLR2E and DNAAF10/WDR92.

Binds specifically to cytosolic chaperonin (c-CPN) and transfers target proteins to it. Binds to nascent polypeptide chain and promotes folding in an environment in which there are many competing pathways for nonnative proteins. The protein is Prefoldin subunit 6 (Pfdn6) of Mus musculus (Mouse).